A 703-amino-acid polypeptide reads, in one-letter code: Protein teflon (703 aa).

The C2H2-type 1 zinc finger occupies 32–55 (MLCHFCKDIFTHLPEFMRHLQWSH). Disordered stretches follow at residues 78–111 (SSEDDVQSQANSCSSGDSGLAGEMEDADGEPGSS), 140–161 (EQSYSKNPPDSRTEGFRCARKP), 205–239 (NDVSKPRLNKLRSKLNNSLSSNISGPPKQSKMPSL), and 339–434 (SQQP…SKLE). Over residues 84-94 (QSQANSCSSGD) the composition is skewed to polar residues. A compositionally biased stretch (basic and acidic residues) spans 148 to 161 (PDSRTEGFRCARKP). Polar residues-rich tracts occupy residues 339-352 (SQQPSELNTTNNAV) and 364-373 (SLTVISSSPI). 2 consecutive C2H2-type zinc fingers follow at residues 649-672 (YFCECCEEIFPNEARYKKHVQSVH) and 677-700 (FTCSECGKSFKRLYFYDKHLKTVH).

The protein belongs to the Teflon family.

The protein resides in the nucleus. The protein localises to the chromosome. Functionally, specifically required in males for proper segregation of autosomal bivalents at meiosis I. Expression is required in the male germ line prior to spermatocyte stage S4. May have a role as a bridging molecule maintaining adhesion to hold autosome bivalents together via heterochromatic connections. The sequence is that of Protein teflon from Drosophila persimilis (Fruit fly).